The primary structure comprises 440 residues: 2-methylisoborneol synthase (440 aa).

The interval 1-116 is disordered; sequence MPDSGPLGPH…SPAPAEPAAG (116 aa). Positions 17–27 are enriched in low complexity; that stretch reads TPATTVPDAPA. Positions 48–58 are enriched in pro residues; that stretch reads PPVPIPSPSPP. A compositionally biased stretch (low complexity) spans 59 to 75; it reads SGSASAAADTPDATTVG. Residues 102-111 are compositionally biased toward pro residues; it reads PSLPGSPAPA. Mg(2+)-binding residues include D197, D198, E202, N345, S349, and E353.

Belongs to the terpene synthase family. 2-methylisoborneol synthase subfamily. Mg(2+) is required as a cofactor.

It carries out the reaction (E)-2-methylgeranyl diphosphate + H2O = 2-methylisoborneol + diphosphate. Its function is as follows. Catalyzes the cyclization of 2-methylgeranyl diphosphate (2-MeGPP) to 2-methylisoborneol (2-MIB), which likely involves the intermediacy of 2-methyllinalyl diphosphate. The protein is 2-methylisoborneol synthase of Streptomyces ambofaciens (strain ATCC 23877 / 3486 / DSM 40053 / JCM 4204 / NBRC 12836 / NRRL B-2516).